The sequence spans 319 residues: Probable metallo-hydrolase YqjP (319 aa).

Residues His-67, His-69, Asp-71, His-72, His-165, Asp-184, and His-231 each coordinate Zn(2+).

Belongs to the metallo-beta-lactamase superfamily. It depends on Zn(2+) as a cofactor.

In Bacillus subtilis (strain 168), this protein is Probable metallo-hydrolase YqjP (yqjP).